The primary structure comprises 272 residues: Tryptophan synthase alpha chain (272 aa).

Residues Glu-49 and Glu-60 each act as proton acceptor in the active site.

The protein belongs to the TrpA family. In terms of assembly, tetramer of two alpha and two beta chains.

The enzyme catalyses (1S,2R)-1-C-(indol-3-yl)glycerol 3-phosphate + L-serine = D-glyceraldehyde 3-phosphate + L-tryptophan + H2O. It participates in amino-acid biosynthesis; L-tryptophan biosynthesis; L-tryptophan from chorismate: step 5/5. In terms of biological role, the alpha subunit is responsible for the aldol cleavage of indoleglycerol phosphate to indole and glyceraldehyde 3-phosphate. This chain is Tryptophan synthase alpha chain, found in Legionella pneumophila (strain Paris).